Consider the following 158-residue polypeptide: Endoribonuclease YbeY (158 aa).

Zn(2+) contacts are provided by His119, His123, and His129.

This sequence belongs to the endoribonuclease YbeY family. The cofactor is Zn(2+).

Its subcellular location is the cytoplasm. In terms of biological role, single strand-specific metallo-endoribonuclease involved in late-stage 70S ribosome quality control and in maturation of the 3' terminus of the 16S rRNA. This Acinetobacter baumannii (strain AB307-0294) protein is Endoribonuclease YbeY.